Here is a 130-residue protein sequence, read N- to C-terminus: Small ribosomal subunit protein uS8 (130 aa).

Belongs to the universal ribosomal protein uS8 family. Part of the 30S ribosomal subunit.

Its function is as follows. One of the primary rRNA binding proteins, it binds directly to 16S rRNA central domain where it helps coordinate assembly of the platform of the 30S subunit. The polypeptide is Small ribosomal subunit protein uS8 (Methanococcus maripaludis (strain C5 / ATCC BAA-1333)).